Here is a 117-residue protein sequence, read N- to C-terminus: Early E3 13.3 kDa protein (117 aa).

The polypeptide is Early E3 13.3 kDa protein (Canine adenovirus serotype 1 (strain Glaxo) (CAdV-1)).